A 620-amino-acid chain; its full sequence is UvrABC system protein C (620 aa).

The 80-residue stretch at 13-92 folds into the GIY-YIG domain; that stretch reads DKPGVYIMKN…IKKYSPRYNI (80 aa). One can recognise a UVR domain in the interval 204 to 239; the sequence is TSIIKNLKLEMEKAAEELEFEKAAKIRDRILAIELI.

Belongs to the UvrC family. Interacts with UvrB in an incision complex.

It localises to the cytoplasm. Its function is as follows. The UvrABC repair system catalyzes the recognition and processing of DNA lesions. UvrC both incises the 5' and 3' sides of the lesion. The N-terminal half is responsible for the 3' incision and the C-terminal half is responsible for the 5' incision. This chain is UvrABC system protein C, found in Clostridium perfringens (strain SM101 / Type A).